We begin with the raw amino-acid sequence, 185 residues long: Ribosome-recycling factor (185 aa).

This sequence belongs to the RRF family.

It is found in the cytoplasm. Its function is as follows. Responsible for the release of ribosomes from messenger RNA at the termination of protein biosynthesis. May increase the efficiency of translation by recycling ribosomes from one round of translation to another. This is Ribosome-recycling factor from Xanthomonas euvesicatoria pv. vesicatoria (strain 85-10) (Xanthomonas campestris pv. vesicatoria).